The chain runs to 360 residues: UDP-3-O-acylglucosamine N-acyltransferase (360 aa).

The Proton acceptor role is filled by His-256. Residues 341–360 (EGSGAETAARPDDDRDEGRG) are disordered. Residues 349–360 (ARPDDDRDEGRG) show a composition bias toward basic and acidic residues.

The protein belongs to the transferase hexapeptide repeat family. LpxD subfamily. Homotrimer.

It carries out the reaction a UDP-3-O-[(3R)-3-hydroxyacyl]-alpha-D-glucosamine + a (3R)-hydroxyacyl-[ACP] = a UDP-2-N,3-O-bis[(3R)-3-hydroxyacyl]-alpha-D-glucosamine + holo-[ACP] + H(+). It participates in bacterial outer membrane biogenesis; LPS lipid A biosynthesis. In terms of biological role, catalyzes the N-acylation of UDP-3-O-acylglucosamine using 3-hydroxyacyl-ACP as the acyl donor. Is involved in the biosynthesis of lipid A, a phosphorylated glycolipid that anchors the lipopolysaccharide to the outer membrane of the cell. The sequence is that of UDP-3-O-acylglucosamine N-acyltransferase from Rhodopseudomonas palustris (strain ATCC BAA-98 / CGA009).